The following is a 151-amino-acid chain: Ribonuclease H (151 aa).

Residues 2 to 143 (SSNVIEIYAD…ADALANKGVD (142 aa)) enclose the RNase H type-1 domain. Mg(2+)-binding residues include D11, E49, D71, and D135.

The protein belongs to the RNase H family. In terms of assembly, monomer. Mg(2+) is required as a cofactor.

It localises to the cytoplasm. It carries out the reaction Endonucleolytic cleavage to 5'-phosphomonoester.. Endonuclease that specifically degrades the RNA of RNA-DNA hybrids. This is Ribonuclease H from Methylobacillus flagellatus (strain ATCC 51484 / DSM 6875 / VKM B-1610 / KT).